The sequence spans 830 residues: Protein translocase subunit SecA (830 aa).

Residues Gln-86, 104–108 (GEGKT), and Asp-491 each bind ATP. Zn(2+)-binding residues include Cys-813, Cys-815, Cys-824, and Cys-825.

Belongs to the SecA family. As to quaternary structure, monomer and homodimer. Part of the essential Sec protein translocation apparatus which comprises SecA, SecYEG and auxiliary proteins SecDF. Other proteins may also be involved. Zn(2+) is required as a cofactor.

It localises to the cell membrane. Its subcellular location is the cytoplasm. It carries out the reaction ATP + H2O + cellular proteinSide 1 = ADP + phosphate + cellular proteinSide 2.. Functionally, part of the Sec protein translocase complex. Interacts with the SecYEG preprotein conducting channel. Has a central role in coupling the hydrolysis of ATP to the transfer of proteins into and across the cell membrane, serving as an ATP-driven molecular motor driving the stepwise translocation of polypeptide chains across the membrane. The sequence is that of Protein translocase subunit SecA from Syntrophomonas wolfei subsp. wolfei (strain DSM 2245B / Goettingen).